The following is a 405-amino-acid chain: Peroxisomal membrane protein PEX13 (405 aa).

The span at methionine 1 to proline 11 shows a compositional bias: pro residues. The tract at residues methionine 1 to asparagine 71 is disordered. The Peroxisomal matrix segment spans residues methionine 1–glutamate 136. Residues proline 61–asparagine 71 show a composition bias toward polar residues. The helical transmembrane segment at serine 137 to tyrosine 157 threads the bilayer. A targeting to peroxisomes region spans residues methionine 147 to serine 235. Topologically, residues asparagine 158 to histidine 176 are cytoplasmic. The helical transmembrane segment at phenylalanine 177–tyrosine 194 threads the bilayer. The segment at phenylalanine 177 to glutamine 198 is interaction with PEX19. The Peroxisomal matrix portion of the chain corresponds to arginine 195–serine 235. Residues tryptophan 236–leucine 256 traverse the membrane as a helical segment. The Cytoplasmic portion of the chain corresponds to serine 257 to leucine 405. The region spanning aspartate 274–lysine 338 is the SH3 domain. Serine 356 carries the post-translational modification Phosphoserine.

The protein belongs to the peroxin-13 family. In terms of assembly, interacts (via SH3 domain) with PEX14 (via SH3-binding motif); forming the PEX13-PEX14 docking complex. Interacts with PEX19.

It is found in the peroxisome membrane. In terms of biological role, component of the PEX13-PEX14 docking complex, a translocon channel that specifically mediates the import of peroxisomal cargo proteins bound to PEX5 receptor. The PEX13-PEX14 docking complex forms a large import pore which can be opened to a diameter of about 9 nm. Mechanistically, PEX5 receptor along with cargo proteins associates with the PEX14 subunit of the PEX13-PEX14 docking complex in the cytosol, leading to the insertion of the receptor into the organelle membrane with the concomitant translocation of the cargo into the peroxisome matrix. Involved in the import of PTS1- and PTS2-type containing proteins. The sequence is that of Peroxisomal membrane protein PEX13 from Mus musculus (Mouse).